The following is a 502-amino-acid chain: Cytochrome P450 71A8 (502 aa).

The helical transmembrane segment at 16–36 threads the bilayer; that stretch reads IISHTLAFQALVSLILLISIT. Positions 93–119 are disordered; it reads PVSSRRRPRGNHENSRSRLRRPRGSRS. C447 contributes to the heme binding site.

The protein belongs to the cytochrome P450 family. It depends on heme as a cofactor.

The protein resides in the membrane. The chain is Cytochrome P450 71A8 (CYP71A8) from Mentha piperita (Peppermint).